The chain runs to 88 residues: MKTLLLTLVVVTIVCLDFGYARTCLKTPEVKSEPCPPGQEVCYTKAWCDRMCSFRGKVIELGCAATCPRQEPGKEITCCSTDDCNTHP.

The N-terminal stretch at 1 to 21 (MKTLLLTLVVVTIVCLDFGYA) is a signal peptide. 5 disulfide bridges follow: Cys-24–Cys-42, Cys-35–Cys-63, Cys-48–Cys-52, Cys-67–Cys-78, and Cys-79–Cys-84.

The protein belongs to the three-finger toxin family. Long-chain subfamily. Type II alpha-neurotoxin sub-subfamily. Expressed by the venom gland.

Its subcellular location is the secreted. In terms of biological role, binds with high affinity to muscular (alpha-1/CHRNA1) and neuronal (alpha-7/CHRNA7) nicotinic acetylcholine receptor (nAChR) and inhibits acetylcholine from binding to the receptor, thereby impairing neuromuscular and neuronal transmission. The chain is Long neurotoxin LNTX-1 from Demansia vestigiata (Lesser black whip snake).